A 371-amino-acid chain; its full sequence is MPARPTPPAVPLALALAAALAAPAPAAAARVKELADVVGVRENALYGYGLVVGLAGTGDSERVLFTQQSVAGMLGRLGIRIDPKDVRSRNVAAVMVTARLPPFARPGTRIDVAVASMGNARSLAGGLLLVTPLSGGDGKVYAVGQGPVQVAGYDAGAGGAELRKNTPTSGRVAGGATVERAVDFALGQAPLVLALRRPDLTTASRVAAAVNAKLGAGTARAVDPAAVELSPPPARKDDAVGFLAEVELLEVEADQRARVVVSERTGTVVAGDGVRLRPVAVAHGGLQVRVQRDPAVSQPAPFGAGRTVEATRDRAAAAEGAGGVVALPAAASVKDLARALDLLGATPRDLVAVLEAIRAAGALDADLEVLE.

The N-terminal stretch at 1–28 (MPARPTPPAVPLALALAAALAAPAPAAA) is a signal peptide.

It belongs to the FlgI family. The basal body constitutes a major portion of the flagellar organelle and consists of four rings (L,P,S, and M) mounted on a central rod.

The protein localises to the periplasm. It is found in the bacterial flagellum basal body. Its function is as follows. Assembles around the rod to form the L-ring and probably protects the motor/basal body from shearing forces during rotation. In Anaeromyxobacter dehalogenans (strain 2CP-C), this protein is Flagellar P-ring protein.